We begin with the raw amino-acid sequence, 36 residues long: Photosystem I reaction center subunit VIII (36 aa).

A helical membrane pass occupies residues 9 to 29 (ILVPLVGLIFPAFSMALFFLY).

It belongs to the PsaI family.

It localises to the plastid. The protein resides in the chloroplast thylakoid membrane. Its function is as follows. May help in the organization of the PsaL subunit. The sequence is that of Photosystem I reaction center subunit VIII from Thalassiosira pseudonana (Marine diatom).